The following is a 147-amino-acid chain: MEKYNREEFEEVIVDIGRVTKVVKGGRRFRFTALVVVGDKKGRVGFGFGKAKEVPDAMKKAVDDAFKNIVEVKLKGSTIPHDIEVKFNASRILLKPASEGTGVIAGGGARPVVELAGIKNILTKSLGSNNSANVVRATIKALSMLKG.

One can recognise an S5 DRBM domain in the interval 9-72; the sequence is FEEVIVDIGR…DDAFKNIVEV (64 aa).

This sequence belongs to the universal ribosomal protein uS5 family. Part of the 30S ribosomal subunit. Contacts proteins S4 and S8.

Its function is as follows. With S4 and S12 plays an important role in translational accuracy. Located at the back of the 30S subunit body where it stabilizes the conformation of the head with respect to the body. This chain is Small ribosomal subunit protein uS5, found in Campylobacter fetus subsp. fetus (strain 82-40).